The sequence spans 382 residues: Dual-specificity RNA methyltransferase RlmN (382 aa).

Catalysis depends on Glu-96, which acts as the Proton acceptor. The region spanning 102–342 (QGKRGTLCVS…VRTTRGEDID (241 aa)) is the Radical SAM core domain. Cys-109 and Cys-345 are joined by a disulfide. The [4Fe-4S] cluster site is built by Cys-116, Cys-120, and Cys-123. Residues 170–171 (GE), Ser-202, 224–226 (SLH), and Asn-302 contribute to the S-adenosyl-L-methionine site. Cys-345 acts as the S-methylcysteine intermediate in catalysis.

It belongs to the radical SAM superfamily. RlmN family. Requires [4Fe-4S] cluster as cofactor.

The protein resides in the cytoplasm. The catalysed reaction is adenosine(2503) in 23S rRNA + 2 reduced [2Fe-2S]-[ferredoxin] + 2 S-adenosyl-L-methionine = 2-methyladenosine(2503) in 23S rRNA + 5'-deoxyadenosine + L-methionine + 2 oxidized [2Fe-2S]-[ferredoxin] + S-adenosyl-L-homocysteine. It catalyses the reaction adenosine(37) in tRNA + 2 reduced [2Fe-2S]-[ferredoxin] + 2 S-adenosyl-L-methionine = 2-methyladenosine(37) in tRNA + 5'-deoxyadenosine + L-methionine + 2 oxidized [2Fe-2S]-[ferredoxin] + S-adenosyl-L-homocysteine. Functionally, specifically methylates position 2 of adenine 2503 in 23S rRNA and position 2 of adenine 37 in tRNAs. m2A2503 modification seems to play a crucial role in the proofreading step occurring at the peptidyl transferase center and thus would serve to optimize ribosomal fidelity. This Pseudomonas syringae pv. tomato (strain ATCC BAA-871 / DC3000) protein is Dual-specificity RNA methyltransferase RlmN.